Reading from the N-terminus, the 116-residue chain is Large ribosomal subunit protein bL19 (116 aa).

It belongs to the bacterial ribosomal protein bL19 family.

Its function is as follows. This protein is located at the 30S-50S ribosomal subunit interface and may play a role in the structure and function of the aminoacyl-tRNA binding site. The protein is Large ribosomal subunit protein bL19 of Staphylococcus haemolyticus (strain JCSC1435).